The sequence spans 68 residues: ATP synthase F(0) complex subunit 8 (68 aa).

The chain crosses the membrane as a helical span at residues 8–24 (VWPTMIAPMLLTLFLIT). Lys54 carries the post-translational modification N6-acetyllysine; alternate. Lys54 carries the N6-succinyllysine; alternate modification. At Lys57 the chain carries N6-acetyllysine.

It belongs to the ATPase protein 8 family. As to quaternary structure, component of the ATP synthase complex composed at least of ATP5F1A/subunit alpha, ATP5F1B/subunit beta, ATP5MC1/subunit c (homooctomer), MT-ATP6/subunit a, MT-ATP8/subunit 8, ATP5ME/subunit e, ATP5MF/subunit f, ATP5MG/subunit g, ATP5MK/subunit k, ATP5MJ/subunit j, ATP5F1C/subunit gamma, ATP5F1D/subunit delta, ATP5F1E/subunit epsilon, ATP5PF/subunit F6, ATP5PB/subunit b, ATP5PD/subunit d, ATP5PO/subunit OSCP. ATP synthase complex consists of a soluble F(1) head domain (subunits alpha(3) and beta(3)) - the catalytic core - and a membrane F(0) domain - the membrane proton channel (subunits c, a, 8, e, f, g, k and j). These two domains are linked by a central stalk (subunits gamma, delta, and epsilon) rotating inside the F1 region and a stationary peripheral stalk (subunits F6, b, d, and OSCP). Interacts with PRICKLE3.

The protein localises to the mitochondrion membrane. In terms of biological role, subunit 8, of the mitochondrial membrane ATP synthase complex (F(1)F(0) ATP synthase or Complex V) that produces ATP from ADP in the presence of a proton gradient across the membrane which is generated by electron transport complexes of the respiratory chain. ATP synthase complex consist of a soluble F(1) head domain - the catalytic core - and a membrane F(1) domain - the membrane proton channel. These two domains are linked by a central stalk rotating inside the F(1) region and a stationary peripheral stalk. During catalysis, ATP synthesis in the catalytic domain of F(1) is coupled via a rotary mechanism of the central stalk subunits to proton translocation. In vivo, can only synthesize ATP although its ATP hydrolase activity can be activated artificially in vitro. Part of the complex F(0) domain. The chain is ATP synthase F(0) complex subunit 8 from Gorilla gorilla gorilla (Western lowland gorilla).